The primary structure comprises 126 residues: MDIENWDTIDQLMADSAQPDFEDWGDLGDLMPDVLPESNGSSSGTATDNDNRCWDHGCNGKKFLNHSNLVRHRRENGSARPRFTCPMCGAYFSRSTARNQHLEKKSCNRVRRYSNGRERPRPRVKD.

Disordered regions lie at residues alanine 17–arginine 52 and glutamate 103–aspartate 126. Residues serine 38–aspartate 48 show a composition bias toward polar residues. The C2H2-type 1; degenerate zinc-finger motif lies at asparagine 51–asparagine 76. The C2H2-type 2; degenerate zinc-finger motif lies at phenylalanine 83–asparagine 115. The segment covering asparagine 115–aspartate 126 has biased composition (basic and acidic residues).

The protein belongs to the GLI C2H2-type zinc-finger protein family.

It is found in the nucleus. Functionally, transcription factor that probably regulates the expression of the gene cluster that mediates the biosynthesis of squalestatin S1 (SQS1, also known as zaragozic acid A), a heavily oxidized fungal polyketide that offers potent cholesterol lowering activity by targeting squalene synthase (SS). The chain is C2H2-type zinc-finger transcription factor M5 from Phoma sp. (strain ATCC 20986 / MF5453).